The following is a 260-amino-acid chain: tRNA (guanine-N(1)-)-methyltransferase (260 aa).

S-adenosyl-L-methionine contacts are provided by residues glycine 117 and 137 to 142 (LGDFVL).

The protein belongs to the RNA methyltransferase TrmD family. Homodimer.

Its subcellular location is the cytoplasm. The catalysed reaction is guanosine(37) in tRNA + S-adenosyl-L-methionine = N(1)-methylguanosine(37) in tRNA + S-adenosyl-L-homocysteine + H(+). Its function is as follows. Specifically methylates guanosine-37 in various tRNAs. This chain is tRNA (guanine-N(1)-)-methyltransferase, found in Cupriavidus metallidurans (strain ATCC 43123 / DSM 2839 / NBRC 102507 / CH34) (Ralstonia metallidurans).